Consider the following 194-residue polypeptide: Recombination protein RecR (194 aa).

The C4-type zinc-finger motif lies at 53-68 (CEICFNLDVTSPCSIC). In terms of domain architecture, Toprim spans 76 to 171 (SLLCIVEELG…KVTRLACGIP (96 aa)).

This sequence belongs to the RecR family.

In terms of biological role, may play a role in DNA repair. It seems to be involved in an RecBC-independent recombinational process of DNA repair. It may act with RecF and RecO. The sequence is that of Recombination protein RecR from Anaplasma phagocytophilum (strain HZ).